The primary structure comprises 298 residues: Elongation factor Ts (298 aa).

The interval 80–83 (TDFV) is involved in Mg(2+) ion dislocation from EF-Tu.

It belongs to the EF-Ts family.

Its subcellular location is the cytoplasm. Its function is as follows. Associates with the EF-Tu.GDP complex and induces the exchange of GDP to GTP. It remains bound to the aminoacyl-tRNA.EF-Tu.GTP complex up to the GTP hydrolysis stage on the ribosome. This chain is Elongation factor Ts, found in Paracidovorax citrulli (strain AAC00-1) (Acidovorax citrulli).